The chain runs to 102 residues: MAESVNENNNNAGDSNGSGRTKRNTIVTIVVVVIVVTLIIILATKKGWIGGSGKKVGAEEPATKLSSKSDDRNGGPNKKSPAKGSSKDDNNTEESVQSNLYG.

The interval Met-1 to Thr-21 is disordered. N-linked (GlcNAc...) asparagine glycosylation is present at Asn-16. A helical membrane pass occupies residues Asn-24–Thr-44. The tract at residues Ile-49–Gly-102 is disordered. A compositionally biased stretch (basic and acidic residues) spans Val-56 to Asn-73. N-linked (GlcNAc...) asparagine glycosylation is present at Asn-90. Positions Glu-93–Gly-102 are enriched in polar residues.

Its subcellular location is the membrane. This is an uncharacterized protein from Encephalitozoon cuniculi (strain GB-M1) (Microsporidian parasite).